The following is a 191-amino-acid chain: MRLFYQRISLLISLCGFFSAAWASDVQPASSTGLWQRFTQNVAETWHHSPHQDLYVPAITWHNRFTYDDEHIRRYNERPWGAGYGISRYDEKGNWHAIYLIAFKDSFNKWEPFGGYAWEKQWRPFDRYQDIHFGAGFTAGVTARDNWKYIPVPALLPLASVGYKQLTFQATYIPGTYNNGNVFFAWLRYRF.

An N-terminal signal peptide occupies residues Met-1–Ala-23. Catalysis depends on residues His-62, Asp-105, and Ser-106.

This sequence belongs to the lipid A palmitoyltransferase family. As to quaternary structure, homodimer.

The protein resides in the cell outer membrane. It carries out the reaction a lipid A + a 1,2-diacyl-sn-glycero-3-phosphocholine = a hepta-acyl lipid A + a 2-acyl-sn-glycero-3-phosphocholine. The enzyme catalyses a lipid IVA + a 1,2-diacyl-sn-glycero-3-phosphocholine = a lipid IVB + a 2-acyl-sn-glycero-3-phosphocholine. It catalyses the reaction a lipid IIA + a 1,2-diacyl-sn-glycero-3-phosphocholine = a lipid IIB + a 2-acyl-sn-glycero-3-phosphocholine. Transfers a fatty acid residue from the sn-1 position of a phospholipid to the N-linked hydroxyfatty acid chain on the proximal unit of lipid A or its precursors. The chain is Lipid A acyltransferase PagP from Sodalis glossinidius (strain morsitans).